The primary structure comprises 171 residues: Crossover junction endodeoxyribonuclease RuvC (171 aa).

Active-site residues include aspartate 7, glutamate 66, and aspartate 138. Mg(2+) is bound by residues aspartate 7, glutamate 66, and aspartate 138.

It belongs to the RuvC family. As to quaternary structure, homodimer which binds Holliday junction (HJ) DNA. The HJ becomes 2-fold symmetrical on binding to RuvC with unstacked arms; it has a different conformation from HJ DNA in complex with RuvA. In the full resolvosome a probable DNA-RuvA(4)-RuvB(12)-RuvC(2) complex forms which resolves the HJ. Requires Mg(2+) as cofactor.

It localises to the cytoplasm. It catalyses the reaction Endonucleolytic cleavage at a junction such as a reciprocal single-stranded crossover between two homologous DNA duplexes (Holliday junction).. Its function is as follows. The RuvA-RuvB-RuvC complex processes Holliday junction (HJ) DNA during genetic recombination and DNA repair. Endonuclease that resolves HJ intermediates. Cleaves cruciform DNA by making single-stranded nicks across the HJ at symmetrical positions within the homologous arms, yielding a 5'-phosphate and a 3'-hydroxyl group; requires a central core of homology in the junction. The consensus cleavage sequence is 5'-(A/T)TT(C/G)-3'. Cleavage occurs on the 3'-side of the TT dinucleotide at the point of strand exchange. HJ branch migration catalyzed by RuvA-RuvB allows RuvC to scan DNA until it finds its consensus sequence, where it cleaves and resolves the cruciform DNA. This is Crossover junction endodeoxyribonuclease RuvC from Francisella tularensis subsp. mediasiatica (strain FSC147).